The sequence spans 52 residues: Repressor-like protein SSo7c3 (52 aa).

Residues 4–51 (EEVVKVSRNYQVTIPAKVRQKFPVKEGDLVKVIYDENGGVVKIQILDS) form the SpoVT-AbrB domain.

The polypeptide is Repressor-like protein SSo7c3 (Saccharolobus solfataricus (strain ATCC 35092 / DSM 1617 / JCM 11322 / P2) (Sulfolobus solfataricus)).